The following is a 952-amino-acid chain: MSRLIVKNLPNGMKEERFRQLFAAFGTLTDCSLKFTKDGKFRKFGFIGFKSEEEAQAALNHFHRSFIDTTRITVEFCKSFGDPSKPRAWSKHAQKSSQPKQPSQDSVPSDTKKDKKKKGPSDLEKLKEDAKFQEFLSIHQKRTQVATWANDALEAKLPKAKTKASSDYLNFDSDSNSDSGQESEEEPAREDPEEEQGLQPKAAVQKELSDMDYLKSKMVRAEVSSEDEDEEDSEDEAVNCEEGSEEEEEEGSPASPAKQGGVSRGAVPGVLRPQEAAGKVEKPVSQKEPTTPYTVKLRGAPFNVTEKNVIEFLAPLKPVAIRIVRNAHGNKTGYVFVDLSSEEEVKKALKCNRDYMGGRYIEVFREKQAPTARGPPKSTTPWQGRTLGENEEEEDLADSGRLFVRNLSYTSSEEDLEKLFSAYGPLSELHYPIDSLTKKPKGFAFVTFMFPEHAVKAYAEVDGQVFQGRMLHVLPSTIKKEASQEANAPGSSYKKKKEAMDKANSSSSHNWNTLFMGPNAVADAIAQKYNATKSQVFDHETRGSVAVRVALGETQLVQEVRSFLIDNGVCLDSFSQAAAERSKTVILAKNLPAGTLAAEIQETFSRFGSLGRVLLPEGGITAIVEFLEPLEARKAFRHLAYSKFHHVPLYLEWAPIGVFGAAPQKKDSQHEQPAEKAEVEQETVLDPEGEKASVEGAEASTGKMEEEEEEEEEEEEESIPGCTLFIKNLNFSTTEETLKGVFSKVGAIKSCTISKKKNKAGVLLSMGFGFVEYKKPEQAQKALKQLQGHTVDGHKLEVRISERATKPALTSTRKKQVPKKQTTSKILVRNIPFQANQREIRELFSTFGELKTVRLPKKMTGTGAHRGFGFVDFITKQDAKKAFNALCHSTHLYGRRLVLEWADSEVTVQTLRRKTARHFQEPPKKKRSAVLDGILEQLEDEDNSDGEQALQL.

The region spanning 2-79 is the RRM 1 domain; sequence SRLIVKNLPN…TRITVEFCKS (78 aa). Disordered stretches follow at residues 85-126, 159-267, and 367-395; these read KPRA…LEKL, KAKT…RGAV, and KQAP…EEED. Positions 95-109 are enriched in low complexity; that stretch reads KSSQPKQPSQDSVPS. Positions 163-180 are enriched in polar residues; the sequence is KASSDYLNFDSDSNSDSG. Ser177, Ser179, and Ser183 each carry phosphoserine. Composition is skewed to acidic residues over residues 181–196 and 224–251; these read QESE…EEEQ and SSED…EEEG. 2 RRM domains span residues 293–368 and 400–478; these read YTVK…REKQ and GRLF…PSTI. Lys479 is covalently cross-linked (Glycyl lysine isopeptide (Lys-Gly) (interchain with G-Cter in SUMO2)). The interval 481 to 504 is disordered; that stretch reads EASQEANAPGSSYKKKKEAMDKAN. Residues 584–656 form the RRM 4 domain; sequence TVILAKNLPA…VPLYLEWAPI (73 aa). A compositionally biased stretch (basic and acidic residues) spans 664–679; the sequence is QKKDSQHEQPAEKAEV. A disordered region spans residues 664-719; the sequence is QKKDSQHEQPAEKAEVEQETVLDPEGEKASVEGAEASTGKMEEEEEEEEEEEEESI. A Phosphoserine modification is found at Ser693. Over residues 705 to 718 the composition is skewed to acidic residues; it reads EEEEEEEEEEEEES. 2 RRM domains span residues 722–803 and 824–904; these read CTLF…ISER and SKIL…WADS. 2 positions are modified to phosphoserine: Ser928 and Ser944.

It belongs to the RRM MRD1 family. As to expression, expressed in the crypts of Lieberkuhn of the intestine (at protein level).

The protein localises to the nucleus. It is found in the nucleolus. Its subcellular location is the nucleoplasm. The protein resides in the cytoplasm. It localises to the chromosome. Plays a role in embryo pre-implantation development. This chain is Probable RNA-binding protein 19 (Rbm19), found in Mus musculus (Mouse).